Reading from the N-terminus, the 450-residue chain is Probable glycylpeptide N-tetradecanoyltransferase (450 aa).

A disordered region spans residues methionine 1–valine 28. The tetradecanoyl-CoA site is built by glutamine 67, phenylalanine 68, tryptophan 69, phenylalanine 200, leucine 201, cysteine 202, valine 203, serine 209, arginine 211, valine 212, and alanine 213.

This sequence belongs to the NMT family.

The protein localises to the cytoplasm. The enzyme catalyses N-terminal glycyl-[protein] + tetradecanoyl-CoA = N-tetradecanoylglycyl-[protein] + CoA + H(+). Functionally, adds a myristoyl group to the N-terminal glycine residue of certain cellular proteins. The protein is Probable glycylpeptide N-tetradecanoyltransferase (nmt-1) of Caenorhabditis elegans.